A 408-amino-acid polypeptide reads, in one-letter code: Dual-specificity RNA methyltransferase RlmN (408 aa).

The active-site Proton acceptor is Glu-126. Residues 132–373 enclose the Radical SAM core domain; the sequence is EEGRGTLCLS…NQAGYASPIR (242 aa). The cysteines at positions 139 and 384 are disulfide-linked. Cys-146, Cys-150, and Cys-153 together coordinate [4Fe-4S] cluster. Residues 210-211, Ser-242, 264-266, and Asn-341 each bind S-adenosyl-L-methionine; these read GE and SLH. The active-site S-methylcysteine intermediate is the Cys-384.

Belongs to the radical SAM superfamily. RlmN family. [4Fe-4S] cluster is required as a cofactor.

It localises to the cytoplasm. It carries out the reaction adenosine(2503) in 23S rRNA + 2 reduced [2Fe-2S]-[ferredoxin] + 2 S-adenosyl-L-methionine = 2-methyladenosine(2503) in 23S rRNA + 5'-deoxyadenosine + L-methionine + 2 oxidized [2Fe-2S]-[ferredoxin] + S-adenosyl-L-homocysteine. It catalyses the reaction adenosine(37) in tRNA + 2 reduced [2Fe-2S]-[ferredoxin] + 2 S-adenosyl-L-methionine = 2-methyladenosine(37) in tRNA + 5'-deoxyadenosine + L-methionine + 2 oxidized [2Fe-2S]-[ferredoxin] + S-adenosyl-L-homocysteine. Its function is as follows. Specifically methylates position 2 of adenine 2503 in 23S rRNA and position 2 of adenine 37 in tRNAs. m2A2503 modification seems to play a crucial role in the proofreading step occurring at the peptidyl transferase center and thus would serve to optimize ribosomal fidelity. The polypeptide is Dual-specificity RNA methyltransferase RlmN (Bartonella tribocorum (strain CIP 105476 / IBS 506)).